Here is a 403-residue protein sequence, read N- to C-terminus: Sex hormone-binding globulin (403 aa).

The first 30 residues, 1-30, serve as a signal peptide directing secretion; the sequence is MEKGEVASLRCRLLLLLLLLTLPPTHQGRT. 2 Laminin G-like domains span residues 46-218 and 225-391; these read KYLS…LGNC and GLFF…THSC. The cysteines at positions 194 and 218 are disulfide-linked. N274 is a glycosylation site (N-linked (GlcNAc...) asparagine). A disulfide bond links C363 and C391. N-linked (GlcNAc...) asparagine glycosylation occurs at N397.

As to quaternary structure, homodimer. Isoform 2 is only expressed in the liver.

It localises to the secreted. Functionally, functions as an androgen transport protein, but may also be involved in receptor mediated processes. Each dimer binds one molecule of steroid. Specific for 5-alpha-dihydrotestosterone, testosterone, and 17-beta-estradiol. Regulates the plasma metabolic clearance rate of steroid hormones by controlling their plasma concentration. The polypeptide is Sex hormone-binding globulin (Shbg) (Rattus norvegicus (Rat)).